We begin with the raw amino-acid sequence, 308 residues long: D-alanine--D-alanine ligase (308 aa).

The ATP-grasp domain occupies 105 to 302 (KAIFRSLGLA…FPDLCERILD (198 aa)). 133–188 (DLPFGLPCVVKPAGEGSSVGVHLVNEAAELGPACRDAASHAGDVIVERYVKGTEVD) lines the ATP pocket. Residues Asp-256, Glu-269, and Asn-271 each coordinate Mg(2+).

This sequence belongs to the D-alanine--D-alanine ligase family. The cofactor is Mg(2+). Requires Mn(2+) as cofactor.

It localises to the cytoplasm. The enzyme catalyses 2 D-alanine + ATP = D-alanyl-D-alanine + ADP + phosphate + H(+). It functions in the pathway cell wall biogenesis; peptidoglycan biosynthesis. In terms of biological role, cell wall formation. This chain is D-alanine--D-alanine ligase, found in Anaeromyxobacter sp. (strain K).